A 223-amino-acid chain; its full sequence is Ribose-5-phosphate isomerase A (223 aa).

Residues 28 to 31 (TGST), 81 to 84 (DGAD), and 94 to 97 (KGGG) contribute to the substrate site. Catalysis depends on Glu103, which acts as the Proton acceptor. Lys121 provides a ligand contact to substrate.

This sequence belongs to the ribose 5-phosphate isomerase family. In terms of assembly, homodimer.

The catalysed reaction is aldehydo-D-ribose 5-phosphate = D-ribulose 5-phosphate. The protein operates within carbohydrate degradation; pentose phosphate pathway; D-ribose 5-phosphate from D-ribulose 5-phosphate (non-oxidative stage): step 1/1. Functionally, catalyzes the reversible conversion of ribose-5-phosphate to ribulose 5-phosphate. This Ruthia magnifica subsp. Calyptogena magnifica protein is Ribose-5-phosphate isomerase A.